The following is a 462-amino-acid chain: ATP synthase subunit beta (462 aa).

Position 152-159 (glycine 152–threonine 159) interacts with ATP.

Belongs to the ATPase alpha/beta chains family. F-type ATPases have 2 components, CF(1) - the catalytic core - and CF(0) - the membrane proton channel. CF(1) has five subunits: alpha(3), beta(3), gamma(1), delta(1), epsilon(1). CF(0) has three main subunits: a(1), b(2) and c(9-12). The alpha and beta chains form an alternating ring which encloses part of the gamma chain. CF(1) is attached to CF(0) by a central stalk formed by the gamma and epsilon chains, while a peripheral stalk is formed by the delta and b chains.

The protein resides in the cell inner membrane. The catalysed reaction is ATP + H2O + 4 H(+)(in) = ADP + phosphate + 5 H(+)(out). In terms of biological role, produces ATP from ADP in the presence of a proton gradient across the membrane. The catalytic sites are hosted primarily by the beta subunits. The chain is ATP synthase subunit beta from Shewanella amazonensis (strain ATCC BAA-1098 / SB2B).